The chain runs to 60 residues: Large ribosomal subunit protein bL32 (60 aa).

Positions 1–16 (MPNPKRRHSKKRTSTR) are enriched in basic residues. Residues 1-28 (MPNPKRRHSKKRTSTRRAHDALKQPGLS) are disordered.

The protein belongs to the bacterial ribosomal protein bL32 family.

In Solibacter usitatus (strain Ellin6076), this protein is Large ribosomal subunit protein bL32.